Here is a 228-residue protein sequence, read N- to C-terminus: Translation initiation factor 6 (228 aa).

Functionally, binds to the 50S ribosomal subunit and prevents its association with the 30S ribosomal subunit to form the 70S initiation complex. This chain is Translation initiation factor 6, found in Methanocaldococcus jannaschii (strain ATCC 43067 / DSM 2661 / JAL-1 / JCM 10045 / NBRC 100440) (Methanococcus jannaschii).